A 368-amino-acid polypeptide reads, in one-letter code: Transaldolase (368 aa).

Lys140 serves as the catalytic Schiff-base intermediate with substrate.

This sequence belongs to the transaldolase family. Type 2 subfamily.

The protein resides in the cytoplasm. The enzyme catalyses D-sedoheptulose 7-phosphate + D-glyceraldehyde 3-phosphate = D-erythrose 4-phosphate + beta-D-fructose 6-phosphate. Its pathway is carbohydrate degradation; pentose phosphate pathway; D-glyceraldehyde 3-phosphate and beta-D-fructose 6-phosphate from D-ribose 5-phosphate and D-xylulose 5-phosphate (non-oxidative stage): step 2/3. Its function is as follows. Transaldolase is important for the balance of metabolites in the pentose-phosphate pathway. This chain is Transaldolase, found in Thermobifida fusca (strain YX).